The sequence spans 467 residues: NALCN channel auxiliary factor 1 (467 aa).

Residues 40–60 (LSLASLLFFTVLLSDHLWFCA) form a helical membrane-spanning segment. The interval 121–161 (MGESSPAAQAHRLLSASSSPTLPPSPGGGGGSKGNRGKNNR) is disordered. N-linked (GlcNAc...) asparagine glycosylation is found at asparagine 160, asparagine 226, and asparagine 254. Disulfide bonds link cysteine 200/cysteine 270, cysteine 235/cysteine 322, cysteine 255/cysteine 270, cysteine 313/cysteine 350, cysteine 333/cysteine 386, cysteine 339/cysteine 385, and cysteine 343/cysteine 370. Basic and acidic residues predominate over residues 390 to 408 (SEEQTAPRPKGTVDRRDSC). Residues 390 to 409 (SEEQTAPRPKGTVDRRDSCP) form a disordered region. A helical membrane pass occupies residues 426–446 (LKLCVLVLILLHTVLTASAAQ). Asparagine 462 carries an N-linked (GlcNAc...) asparagine glycan.

This sequence belongs to the NALF family. In terms of assembly, component of the NALCN channel complex. NALCN complex consists of NALCN and auxiliary subunits, UNC79, UNC80 and NACL1. These auxiliary subunits are essential for the NALCN channel function.

Its subcellular location is the cell membrane. In terms of biological role, auxillary component of the NALCN sodium channel complex, a channel that regulates the resting membrane potential and controls neuronal excitability. This chain is NALCN channel auxiliary factor 1, found in Mus musculus (Mouse).